The sequence spans 207 residues: 3-isopropylmalate dehydratase small subunit (207 aa).

Belongs to the LeuD family. LeuD type 1 subfamily. In terms of assembly, heterodimer of LeuC and LeuD.

It catalyses the reaction (2R,3S)-3-isopropylmalate = (2S)-2-isopropylmalate. It participates in amino-acid biosynthesis; L-leucine biosynthesis; L-leucine from 3-methyl-2-oxobutanoate: step 2/4. In terms of biological role, catalyzes the isomerization between 2-isopropylmalate and 3-isopropylmalate, via the formation of 2-isopropylmaleate. This is 3-isopropylmalate dehydratase small subunit from Rhodospirillum rubrum (strain ATCC 11170 / ATH 1.1.1 / DSM 467 / LMG 4362 / NCIMB 8255 / S1).